The following is a 1577-amino-acid chain: MSMKMADPTKISILGRESIVADYSIWGTYIVQDLLTNLSSTTYVLVTDTNLGSIYLEKFSKIFNEAAAALSPPPRLLTKEIPPGENSKSRQGKADIEDWMLQQTCGRDTVIIALGGGVIGDLLGFVASTYMRGIRFVQVPTTLLAMVDSSIGGKTAIDTPLGKNLIGAIWQPQRIYIDIDFIDTLPEREFINGMAEVIKTAAISDEKEFAALERHADAILNAARSKARKGRFDAVRQELKDHIVASARHKAYVVTADEREGGLRNLLNLGHSIGHAIEAILSPQVLHGECVAIGMVKELELARYLGILKPVAVSRMIKCLSKYGLPTSLKDQRVRKHTAGKHCPLDQLMANMALDKKNDGPKKKVVLLSAIGQTYEPKASVVSNEDIRAVLAPSIEVIPGVPKSLNVVCAPPGSKSISNRALVLAALGSGTVRIKNLLHSDDTEVMLNALEHLGAATFAWEEEGEVLVVNGNGGKMQASPTELYLGNAGTASRFLTSVATLSGKGSVDFNILTGNNRMKQRPIGDLVDALTVNGAEIEYLEKAGSLPLKIAASGGFKGGRINLAAKVSSQYVSSLLMCAPYAKEPVVLKLVGGRPISLSYIEMTTAMMRSFGIDVQQSTTEEWTYHIPQGSYTNPAEYVIESDASSATYPLAIAAVTGTTCTVPNIGSASLQGDARFAVDVLRPMGCKVEQTATSTTVTGPADGVLRPLPNVDMEPMTDAFLGASVLAAIAQGEGSNHTTRIYGIANQRVKECNRIEAMRVELAKFGVVCREHPDGLEIDGIDRSTLRHPAGGVFCYDDHRVAFSFSILALVAPMPTLILEKECVGKTWPTYWDALKQKFGVRLEGKELDESVTTHHAPADRSNASVIIIGMRGAGKTTTGRWAAKVLNRKFIDLDVELEQTEGKSIPEIIKERGWQGFRDAELALFKRVLAERPTGHVLACGGGIVEIGEARKILTDYHKNKGNVLLVMRDIKRVMEFLNVDKTRPAYIEDMMSVWLRRKPWYHECSNVQYYSRHSSAPELALAVEDFGRFIQVVSGKIDYLAAIRKKRLSFFVSLTLPDLRDTGDLLRTVASGSDAVELRVDLLKDPSSDSAIPSAEYVAEQISFYRSKVALPIVFTVRTVSQGGKFPDDAHDAALELITLAIRSGCEFIDLEITFPEELLRKVTESKAHAKIIASHHDPQGKLNWANGSWIQYYNKALQYGDIIKLVGVAESLKDNTALKEFKDWAEQAHDVPVIAINMGDKGQLSRMLNGFLTPVSHPALPFKAAPGQLSAAEIRKGLSIMGEIPAKKFAIFGKPILASRSPAMHNTLFEQNGLPHVYTRLETDQTQDVKEFIRSPDFGGASVTIPLKLDIIPLIDEVLNEAEIIGAVNTIIPVEGKDGTTRLIGRNTDWSGIVRCLREAGAHSNEGKSSALVIGGGGTARAAIYALHHMGFSTVYVLGRSPEKIQNMASTFPTGFDIRVLENADDIETIPRVAVGTVPGDQPIEPNMREILCTIFKRSGQDPSADGASSVLLEMAYKPSVTPLMRLASDAGWKTIPGLEALVGQGVYQFEYWTGITPVYEVARNAVLGTNEK.

Positions 1–384 (MSMKMADPTK…YEPKASVVSN (384 aa)) are 3-dehydroquinate synthase. NAD(+) is bound by residues 48–50 (DTN), 85–88 (ENSK), 116–118 (GGV), and Asp121. Arg132 contributes to the 7-phospho-2-dehydro-3-deoxy-D-arabino-heptonate binding site. 141-142 (TT) contacts NAD(+). 2 residues coordinate 7-phospho-2-dehydro-3-deoxy-D-arabino-heptonate: Asp148 and Lys154. Lys163 is a binding site for NAD(+). Asn164 contacts 7-phospho-2-dehydro-3-deoxy-D-arabino-heptonate. Residues 181 to 184 (FIDT) and Asn192 contribute to the NAD(+) site. Glu196 contributes to the Zn(2+) binding site. Residues 196–199 (EVIK) and Lys250 contribute to the 7-phospho-2-dehydro-3-deoxy-D-arabino-heptonate site. Glu260 (proton acceptor; for 3-dehydroquinate synthase activity) is an active-site residue. Residues 264 to 268 (RNLLN) and His271 contribute to the 7-phospho-2-dehydro-3-deoxy-D-arabino-heptonate site. His271 serves as a coordination point for Zn(2+). His275 (proton acceptor; for 3-dehydroquinate synthase activity) is an active-site residue. Residues His287 and Lys356 each coordinate 7-phospho-2-dehydro-3-deoxy-D-arabino-heptonate. His287 is a Zn(2+) binding site. Residues 397-842 (VIPGVPKSLN…WDALKQKFGV (446 aa)) form an EPSP synthase region. The active-site For EPSP synthase activity is the Cys824. The interval 864 to 1056 (NASVIIIGMR…RKKRLSFFVS (193 aa)) is shikimate kinase. Residue 871-878 (GMRGAGKT) coordinates ATP. The 3-dehydroquinase stretch occupies residues 1057 to 1277 (LTLPDLRDTG…AAPGQLSAAE (221 aa)). Residue His1180 is the Proton acceptor; for 3-dehydroquinate dehydratase activity of the active site. Residue Lys1208 is the Schiff-base intermediate with substrate; for 3-dehydroquinate dehydratase activity of the active site. Residues 1290 to 1577 (AKKFAIFGKP…RNAVLGTNEK (288 aa)) are shikimate dehydrogenase.

In the N-terminal section; belongs to the sugar phosphate cyclases superfamily. Dehydroquinate synthase family. The protein in the 2nd section; belongs to the EPSP synthase family. It in the 3rd section; belongs to the shikimate kinase family. This sequence in the 4th section; belongs to the type-I 3-dehydroquinase family. In the C-terminal section; belongs to the shikimate dehydrogenase family. Homodimer. Requires Zn(2+) as cofactor.

The protein resides in the cytoplasm. The enzyme catalyses 7-phospho-2-dehydro-3-deoxy-D-arabino-heptonate = 3-dehydroquinate + phosphate. It carries out the reaction 3-dehydroquinate = 3-dehydroshikimate + H2O. It catalyses the reaction shikimate + NADP(+) = 3-dehydroshikimate + NADPH + H(+). The catalysed reaction is shikimate + ATP = 3-phosphoshikimate + ADP + H(+). The enzyme catalyses 3-phosphoshikimate + phosphoenolpyruvate = 5-O-(1-carboxyvinyl)-3-phosphoshikimate + phosphate. It functions in the pathway metabolic intermediate biosynthesis; chorismate biosynthesis; chorismate from D-erythrose 4-phosphate and phosphoenolpyruvate: step 2/7. The protein operates within metabolic intermediate biosynthesis; chorismate biosynthesis; chorismate from D-erythrose 4-phosphate and phosphoenolpyruvate: step 3/7. Its pathway is metabolic intermediate biosynthesis; chorismate biosynthesis; chorismate from D-erythrose 4-phosphate and phosphoenolpyruvate: step 4/7. It participates in metabolic intermediate biosynthesis; chorismate biosynthesis; chorismate from D-erythrose 4-phosphate and phosphoenolpyruvate: step 5/7. It functions in the pathway metabolic intermediate biosynthesis; chorismate biosynthesis; chorismate from D-erythrose 4-phosphate and phosphoenolpyruvate: step 6/7. The AROM polypeptide catalyzes 5 consecutive enzymatic reactions in prechorismate polyaromatic amino acid biosynthesis. This Talaromyces stipitatus (strain ATCC 10500 / CBS 375.48 / QM 6759 / NRRL 1006) (Penicillium stipitatum) protein is Pentafunctional AROM polypeptide.